Consider the following 459-residue polypeptide: Glycosyl hydrolase family 109 protein 1 (459 aa).

A signal peptide (tat-type signal) is located at residues 1 to 31 (MHNIHRRHFLKAAGAVTAGLVTANIALNANA). Residues 64–65 (ER), Asp86, 135–138 (WEWH), 155–156 (EV), and Asn184 contribute to the NAD(+) site. Substrate-binding positions include Tyr213, Arg232, 244 to 247 (YPTH), and Tyr326. Position 244 (Tyr244) interacts with NAD(+).

The protein belongs to the Gfo/Idh/MocA family. Glycosyl hydrolase 109 subfamily. Requires NAD(+) as cofactor. Predicted to be exported by the Tat system. The position of the signal peptide cleavage has not been experimentally proven.

Glycosidase. This chain is Glycosyl hydrolase family 109 protein 1, found in Shewanella sp. (strain MR-7).